A 330-amino-acid chain; its full sequence is Phenylalanine--tRNA ligase alpha subunit (330 aa).

E255 contacts Mg(2+).

It belongs to the class-II aminoacyl-tRNA synthetase family. Phe-tRNA synthetase alpha subunit type 1 subfamily. In terms of assembly, tetramer of two alpha and two beta subunits. Mg(2+) is required as a cofactor.

It localises to the cytoplasm. It catalyses the reaction tRNA(Phe) + L-phenylalanine + ATP = L-phenylalanyl-tRNA(Phe) + AMP + diphosphate + H(+). The polypeptide is Phenylalanine--tRNA ligase alpha subunit (Acinetobacter baumannii (strain AYE)).